An 84-amino-acid polypeptide reads, in one-letter code: ATP synthase subunit c (84 aa).

2 helical membrane passes run 9-29 (IIGA…GFAI) and 54-74 (IVAG…LLFI).

It belongs to the ATPase C chain family. In terms of assembly, F-type ATPases have 2 components, F(1) - the catalytic core - and F(0) - the membrane proton channel. F(1) has five subunits: alpha(3), beta(3), gamma(1), delta(1), epsilon(1). F(0) has three main subunits: a(1), b(2) and c(10-14). The alpha and beta chains form an alternating ring which encloses part of the gamma chain. F(1) is attached to F(0) by a central stalk formed by the gamma and epsilon chains, while a peripheral stalk is formed by the delta and b chains.

It localises to the cell inner membrane. Functionally, f(1)F(0) ATP synthase produces ATP from ADP in the presence of a proton or sodium gradient. F-type ATPases consist of two structural domains, F(1) containing the extramembraneous catalytic core and F(0) containing the membrane proton channel, linked together by a central stalk and a peripheral stalk. During catalysis, ATP synthesis in the catalytic domain of F(1) is coupled via a rotary mechanism of the central stalk subunits to proton translocation. Key component of the F(0) channel; it plays a direct role in translocation across the membrane. A homomeric c-ring of between 10-14 subunits forms the central stalk rotor element with the F(1) delta and epsilon subunits. In Actinobacillus pleuropneumoniae serotype 7 (strain AP76), this protein is ATP synthase subunit c.